We begin with the raw amino-acid sequence, 782 residues long: General transcription and DNA repair factor IIH helicase/translocase subunit XPB (782 aa).

The segment covering 1–11 (MGKRDRADRDK) has biased composition (basic and acidic residues). 2 disordered regions span residues 1–51 (MGKR…ESGT) and 218–241 (SAIS…PQGK). Positions 6-18 (RADRDKKKSRKRH) match the Nuclear localization signal motif. Acidic residues predominate over residues 21 to 30 (DEEDDEEDAP). The span at 218-236 (SAISKTAESSGGPSTSRVT) shows a compositional bias: polar residues. The Helicase ATP-binding domain maps to 327–488 (MFGNGRARSG…DLNFLIGPKL (162 aa)). 340 to 347 (LPCGAGKS) is a binding site for ATP. Residues 441 to 444 (DEVH) carry the DEVH box motif. Residues 542–702 (RACQFLIKFH…LAGMEEEDLA (161 aa)) form the Helicase C-terminal domain. ATP contacts are provided by Arg-642 and Arg-645. Ser-686 carries the post-translational modification Phosphoserine. Residue Ser-751 is modified to Phosphoserine; by CK2.

The protein belongs to the helicase family. RAD25/XPB subfamily. Component of the 7-subunit TFIIH core complex composed of XPB/ERCC3, XPD/ERCC2, GTF2H1, GTF2H2, GTF2H3, GTF2H4 and GTF2H5, which is active in NER. The core complex associates with the 3-subunit CDK-activating kinase (CAK) module composed of CCNH/cyclin H, CDK7 and MNAT1 to form the 10-subunit holoenzyme (holo-TFIIH) active in transcription. Interacts with PUF60. Interacts with ATF7IP. Interacts with KAT2A; leading to KAT2A recruitment to promoters and acetylation of histones. Part of TBP-based Pol II pre-initiation complex (PIC), in which Pol II core assembles with general transcription factors and other specific initiation factors including GTF2E1, GTF2E2, GTF2F1, GTF2F2, TCEA1, ERCC2, ERCC3, GTF2H2, GTF2H3, GTF2H4, GTF2H5, GTF2A1, GTF2A2, GTF2B and TBP; this large multi-subunit PIC complex mediates DNA unwinding and targets Pol II core to the transcription start site where the first phosphodiester bond forms. In terms of assembly, (Microbial infection) Interacts with Epstein-Barr virus EBNA2. In terms of processing, phosphorylation on Ser-751 by CK2 controls the 5'-excision activity of ERCC1-XPF endonuclease; phosphorylated protein inhibits the excision activity and thus NER. Dephosphorylation reactivates the 5'-excision step. Phosphorylation has no effect on transcription or the 3'-5' helicase activity.

Its subcellular location is the nucleus. It carries out the reaction Couples ATP hydrolysis with the unwinding of duplex DNA by translocating in the 3'-5' direction.. It catalyses the reaction ATP + H2O = ADP + phosphate + H(+). Its activity is regulated as follows. Phosphorylation on Ser-751 by CK2 controls the 5'-excision activity of ERCC1-XPF endonuclease; phosphorylated protein inhibits the excision activity and thus NER. ATPase activity is stimulated by TFIIH subunit p52 (GTF2H4). DNA translocase activity by this subunit in TFIIH is stimulated by XPA, ERCC5/XPG and XFP plus ERCC1; translocase activity is sensitive to triptolide which targets this enzyme. Its function is as follows. ATP-dependent 3'-5' DNA helicase/translocase. Binds dsDNA rather than ssDNA, unzipping it in a translocase rather than classical helicase activity. Component of the general transcription and DNA repair factor IIH (TFIIH) core complex. When complexed to CDK-activating kinase (CAK), involved in RNA transcription by RNA polymerase II. The ATPase activity of XPB/ERCC3, but not its helicase activity, is required for DNA opening; it may wrap around the damaged DNA wedging it open, causing localized melting that allows XPD/ERCC2 helicase to anchor. In transcription, TFIIH has an essential role in transcription initiation. When the pre-initiation complex (PIC) has been established, TFIIH is required for promoter opening and promoter escape. The ATP-dependent helicase activity of XPB/ERCC3 is required for promoter opening and promoter escape. In transcription pre-initiation complexes induces and propagates a DNA twist to open DNA. Also involved in transcription-coupled nucleotide excision repair (NER) of damaged DNA. In NER, TFIIH acts by opening DNA around the lesion to allow the excision of the damaged oligonucleotide and its replacement by a new DNA fragment. The structure of the TFIIH transcription complex differs from the NER-TFIIH complex; large movements by XPD/ERCC2 and XPB/ERCC3 are stabilized by XPA. XPA retains XPB/ERCC3 at the 5' end of a DNA bubble (mimicking DNA damage). The polypeptide is General transcription and DNA repair factor IIH helicase/translocase subunit XPB (Homo sapiens (Human)).